Here is a 160-residue protein sequence, read N- to C-terminus: MDALIEEVDGISNRTEFNGKKLLDGTETDGFTFQIGANAGQQLTVNIDSMSSTALGVNALNVTDFANTPFDTQLESIDTAINNVSNQRAKLGAVQNRLEHTINNLGASSENLTAAESRIRDVDMAKEMSEFTKNNIPSQASQAMLAQANQQPQNVLQLLR.

This sequence belongs to the bacterial flagellin family. As to quaternary structure, interacts with FliW.

Its subcellular location is the bacterial flagellum. The polypeptide is Putative flagellin YvzB (yvzB) (Bacillus subtilis (strain 168)).